A 480-amino-acid chain; its full sequence is Nuclear receptor subfamily 6 group A member 1 (480 aa).

The tract at residues 1–32 (MERDEPPPSGGGGGGGSAGFLEPPAALPPPPR) is disordered. The segment at residues 57 to 132 (QRTCLICGDR…MGMNRKAIRE (76 aa)) is a DNA-binding region (nuclear receptor). Zn(2+)-binding residues include C60, C63, C77, C80, C96, C102, C112, and C115. 2 NR C4-type zinc fingers span residues 60–80 (CLICGDRATGLHYGIISCEGC) and 96–120 (CSRDKNCVMSRKQRNRCQYCRLLKC). 2 disordered regions span residues 131–150 (REDGMPGGRNKSIGPVQISE) and 162–199 (FEEEANHWSNHGDSDHSSPGNRASESNQPSPGSTLSSS). Basic and acidic residues predominate over residues 165–177 (EANHWSNHGDSDH). Positions 172 to 253 (HGDSDHSSPG…RSLDPQSYSL (82 aa)) are sufficient for interaction with UIMC1. A compositionally biased stretch (low complexity) spans 187–199 (SNQPSPGSTLSSS). The NR LBD domain occupies 249-480 (QSYSLIHQLL…HSCKTSVGKE (232 aa)).

Belongs to the nuclear hormone receptor family. NR6 subfamily. In terms of assembly, homodimer. Interacts with UIMC1. As to expression, shows highest expression in the germ cells of the adult testis.

The protein resides in the nucleus. Its function is as follows. Orphan nuclear receptor that binds to a response element containing the sequence 5'-TCAAGGTCA-3'. Acts as a regulator of embryonic stem cell pluripotency by mediating repression of POU5F1/OCT4: binds to the DR0 element within the POU5F1/OCT4 promoter and inhibits POU5F1/OCT4 expression during embryonic stem cell differentiation. Involved in the regulation of gene expression in germ cell development during gametogenesis. The sequence is that of Nuclear receptor subfamily 6 group A member 1 (NR6A1) from Homo sapiens (Human).